The following is a 791-amino-acid chain: Splicing factor 3A subunit 1 (791 aa).

Residues M1–G41 form a disordered region. A Glycyl lysine isopeptide (Lys-Gly) (interchain with G-Cter in SUMO2) cross-link involves residue K20. Basic and acidic residues predominate over residues Q21 to T34. The SURP motif 1 repeat unit spans residues I52–Y94. At K55 the chain carries N6-acetyllysine. Residue K131 forms a Glycyl lysine isopeptide (Lys-Gly) (interchain with G-Cter in SUMO2) linkage. Residues V166–F208 form an SURP motif 2 repeat. The tract at residues G318–S411 is disordered. 2 positions are modified to phosphoserine: S320 and S329. Positions S320 to K336 are enriched in acidic residues. The segment covering T340–Q351 has biased composition (polar residues). Acidic residues predominate over residues D352–E362. Residue S357 is modified to Phosphoserine. Over residues V366 to P382 the composition is skewed to pro residues. Residues I386–A395 show a composition bias toward basic and acidic residues. A Phosphoserine modification is found at S411. A Glycyl lysine isopeptide (Lys-Gly) (interchain with G-Cter in SUMO2) cross-link involves residue K422. S449 is subject to Phosphoserine. A Phosphotyrosine modification is found at Y454. A compositionally biased stretch (basic and acidic residues) spans I486–W500. Disordered regions lie at residues I486 to A516, H528 to P582, and P664 to K684. A Glycyl lysine isopeptide (Lys-Gly) (interchain with G-Cter in SUMO2) cross-link involves residue K497. Residue S506 is modified to Phosphoserine. The span at M507–A516 shows a compositional bias: polar residues. Residue K540 forms a Glycyl lysine isopeptide (Lys-Gly) (interchain with G-Cter in SUMO2) linkage. Residues A561 to P570 show a composition bias toward polar residues. Pro residues predominate over residues P664–P673. The required and sufficient for nuclear import stretch occupies residues P678–K700. K684 participates in a covalent cross-link: Glycyl lysine isopeptide (Lys-Gly) (interchain with G-Cter in SUMO2). The 84-residue stretch at I705–G788 folds into the Ubiquitin-like domain. Y757 is subject to Phosphotyrosine.

As to quaternary structure, component of the 17S U2 SnRNP complex, a ribonucleoprotein complex that contains small nuclear RNA (snRNA) U2 and a number of specific proteins. Part of the SF3A subcomplex of the 17S U2 SnRNP complex which is composed of three subunits; SF3A3/SAP61, SF3A2/SAP62 and SF3A1/SAP114. SF3A associates with the splicing factor SF3B and a 12S RNA unit to form the mature 17S U2 small nuclear ribonucleoprotein complex (17S U2 snRNP). SF3A1 functions as a scaffold that interacts directly with both SF3A2 and SF3A3. Identified in the spliceosome 'E' complex, a precursor of the spliceosome 'A' complex. Identified in the spliceosome 'A' and 'B' complexes. Identified in the spliceosome 'C' complex. Interacts with P2RX6; resulting in a reduction of the splicing activity.

It localises to the nucleus. Its subcellular location is the nucleus speckle. Functionally, component of the 17S U2 SnRNP complex of the spliceosome, a large ribonucleoprotein complex that removes introns from transcribed pre-mRNAs. The 17S U2 SnRNP complex (1) directly participates in early spliceosome assembly and (2) mediates recognition of the intron branch site during pre-mRNA splicing by promoting the selection of the pre-mRNA branch-site adenosine, the nucleophile for the first step of splicing. Within the 17S U2 SnRNP complex, SF3A1 is part of the SF3A subcomplex that contributes to the assembly of the 17S U2 snRNP, and the subsequent assembly of the pre-spliceosome 'E' complex and the pre-catalytic spliceosome 'A' complex. Involved in pre-mRNA splicing as a component of pre-catalytic spliceosome 'B' complexes. This is Splicing factor 3A subunit 1 (Sf3a1) from Mus musculus (Mouse).